A 470-amino-acid chain; its full sequence is UDP-N-acetylmuramoylalanine--D-glutamate ligase (470 aa).

121-127 (GTNGKST) is an ATP binding site.

It belongs to the MurCDEF family.

The protein localises to the cytoplasm. The enzyme catalyses UDP-N-acetyl-alpha-D-muramoyl-L-alanine + D-glutamate + ATP = UDP-N-acetyl-alpha-D-muramoyl-L-alanyl-D-glutamate + ADP + phosphate + H(+). It functions in the pathway cell wall biogenesis; peptidoglycan biosynthesis. Cell wall formation. Catalyzes the addition of glutamate to the nucleotide precursor UDP-N-acetylmuramoyl-L-alanine (UMA). The sequence is that of UDP-N-acetylmuramoylalanine--D-glutamate ligase from Rhizobium etli (strain ATCC 51251 / DSM 11541 / JCM 21823 / NBRC 15573 / CFN 42).